The sequence spans 115 residues: Large ribosomal subunit protein bL19 (115 aa).

It belongs to the bacterial ribosomal protein bL19 family.

This protein is located at the 30S-50S ribosomal subunit interface and may play a role in the structure and function of the aminoacyl-tRNA binding site. This is Large ribosomal subunit protein bL19 from Francisella tularensis subsp. holarctica (strain FTNF002-00 / FTA).